We begin with the raw amino-acid sequence, 467 residues long: F-box protein pof9 (467 aa).

The F-box domain occupies 3–49 (KSPFLELSYDILLEISTYLDYKDIVHLSETCKSLSYVFDDKTIWHRF). RCC1 repeat units lie at residues 77-131 (RGYA…LLNE), 302-354 (ETFT…YLTS), and 355-417 (DHSI…AAGG).

As to quaternary structure, interacts with skp1.

It is found in the cytoplasm. The protein localises to the nucleus. This Schizosaccharomyces pombe (strain 972 / ATCC 24843) (Fission yeast) protein is F-box protein pof9 (pof9).